Consider the following 420-residue polypeptide: MKLSAPLLVSLAAFSQAVTALVAFPGAEGFGANAIGGRNGQVYVVTNLNDSGTGSLRDAVSATDRIVVFAVGGVIKISDRIVVSKRVTILGQTAPGDGITVYGNGWSFSNADDAIVRYIRIRMGKGGSSGKDALGIAEGNRMIFDHVSVSWGRDETFSINGDASNITVQNSIIAQGLETHSCGGLMQTDGGVSLFRNLYIDNKTRNPKVKGVNEFTNNVVYNWGGGGGYIAGDSAGQSYANIIGNYFISGPSTSVTAFTRGNANFHGYVQNNYYDPDKDGQLDGFELGVSSSNYGGVAIMSSKYNYPAVAYTMSPAEAVTYVTKYAGASKVRDSVDTQLIAQVQSWGTEGGLISDEATMGGPGTLNGGTPAKDTDGDGIPDEAEKQLGTDPNTNDSMKLHSSGYTYLEVWANSLVPSTYH.

Positions 1–20 (MKLSAPLLVSLAAFSQAVTA) are cleaved as a signal peptide. 3 N-linked (GlcNAc...) asparagine glycosylation sites follow: asparagine 49, asparagine 165, and asparagine 202. The active site involves arginine 205. Residues 262 to 297 (NANFHGYVQNNYYDPDKDGQLDGFELGVSSSNYGGV) enclose the EF-hand domain. Ca(2+) contacts are provided by aspartate 275, aspartate 277, aspartate 279, glutamine 281, and glutamate 286. Residues 358-396 (TMGGPGTLNGGTPAKDTDGDGIPDEAEKQLGTDPNTNDS) are disordered. A glycan (N-linked (GlcNAc...) asparagine) is linked at asparagine 394.

The protein belongs to the polysaccharide lyase 1 family. Requires Ca(2+) as cofactor.

Its subcellular location is the secreted. The catalysed reaction is Eliminative cleavage of (1-&gt;4)-alpha-D-galacturonan to give oligosaccharides with 4-deoxy-alpha-D-galact-4-enuronosyl groups at their non-reducing ends.. Functionally, pectinolytic enzyme consist of four classes of enzymes: pectin lyase, polygalacturonase, pectin methylesterase and rhamnogalacturonase. Among pectinolytic enzymes, pectin lyase is the most important in depolymerization of pectin, since it cleaves internal glycosidic bonds of highly methylated pectins. Favors pectate, the anion, over pectin, the methyl ester. The chain is Probable pectate lyase C (plyC) from Aspergillus fumigatus (strain CBS 144.89 / FGSC A1163 / CEA10) (Neosartorya fumigata).